A 674-amino-acid polypeptide reads, in one-letter code: Sterile alpha motif domain-containing protein 15 (674 aa).

A compositionally biased stretch (acidic residues) spans 1 to 18 (MAEVPEDYDSGPDEDGEL). Residues 1 to 448 (MAEVPEDYDS…LEHREPKRGK (448 aa)) are disordered. 3 stretches are compositionally biased toward basic and acidic residues: residues 87 to 142 (IAKE…EEAK), 195 to 223 (ESLR…KLGE), and 236 to 274 (TKPE…KSSE). Residues 276–290 (AGLEPPEETQPEVPE) show a composition bias toward acidic residues. Composition is skewed to basic and acidic residues over residues 291-322 (EMQR…KSTD), 330-346 (EEIK…KTNE), 354-372 (EMMK…EKKN), and 391-429 (VEEK…EPIK). The region spanning 545 to 608 (WDPEEVAEWI…SRHTQELLEI (64 aa)) is the SAM domain.

In Homo sapiens (Human), this protein is Sterile alpha motif domain-containing protein 15 (SAMD15).